The primary structure comprises 465 residues: Putative ABC transporter ATP-binding protein MG065 homolog (465 aa).

An ABC transporter domain is found at 232-465; it reads IELKNVYKYI…PKQVEDINWI (234 aa). 268–275 serves as a coordination point for ATP; that stretch reads GPSGSGKT.

This sequence belongs to the ABC transporter superfamily.

In Mycoplasma pneumoniae (strain ATCC 29342 / M129 / Subtype 1) (Mycoplasmoides pneumoniae), this protein is Putative ABC transporter ATP-binding protein MG065 homolog.